A 240-amino-acid chain; its full sequence is Putative truncated effector protein hopW1-2 (240 aa).

The interval 1 to 32 (MSPAQIIRTSHSFPPSFTGTSSSAENSHAQSP) is disordered. Residues 9-23 (TSHSFPPSFTGTSSS) are compositionally biased toward low complexity.

Belongs to the HopW family.

The protein is Putative truncated effector protein hopW1-2 (hopW1-2) of Pseudomonas syringae pv. maculicola.